A 200-amino-acid polypeptide reads, in one-letter code: Prophage tail fiber assembly protein homolog TfaE (200 aa).

This sequence belongs to the tfa family.

The sequence is that of Prophage tail fiber assembly protein homolog TfaE (tfaE) from Escherichia coli (strain K12).